Consider the following 329-residue polypeptide: BTB/POZ domain-containing adapter for CUL3-mediated RhoA degradation protein 1 (329 aa).

Residues 1–15 are compositionally biased toward low complexity; the sequence is MSAEASGPAAAEAPS. The tract at residues 1–21 is disordered; that stretch reads MSAEASGPAAAEAPSLEVAKP. The BTB domain occupies 41-109; that stretch reads KYVKLNVGGS…LRDGSVPLPE (69 aa). Residues 280–302 form a disordered region; it reads LEATGGAAGGGGASRGEDEDNRE.

This sequence belongs to the BACURD family. As to quaternary structure, homotetramer; forms a two-fold symmetric tetramer in solution. Interacts with CUL3; interaction is direct and forms a 5:5 heterodecamer. Component of the BCR(KCTD13) E3 ubiquitin ligase complex, at least composed of CUL3, KCTD13/BACURD1 and RBX1. Interacts with RHOA; with a preference for RhoA-GDP. Interacts with POLD2 and PCNA. Interacts with SPRTN.

It localises to the nucleus. The protein operates within protein modification; protein ubiquitination. Its function is as follows. Substrate-specific adapter of a BCR (BTB-CUL3-RBX1) E3 ubiquitin-protein ligase complex required for synaptic transmission. The BCR(KCTD13) E3 ubiquitin ligase complex mediates the ubiquitination of RHOA, leading to its degradation by the proteasome, thereby regulating the actin cytoskeleton and promoting synaptic transmission. The sequence is that of BTB/POZ domain-containing adapter for CUL3-mediated RhoA degradation protein 1 (KCTD13) from Bos taurus (Bovine).